The sequence spans 618 residues: tRNA endonuclease vms-1 (618 aa).

The C2H2-type zinc-finger motif lies at 59–85; that stretch reads DQCTTCNCPVDFGDRAVLLEHYQSLFH. The region spanning 170-311 is the VLRF1 domain; that stretch reads RPFDCAIFLW…SDCWQRLQQV (142 aa). Glutamine 213 is an active-site residue. ANK repeat units follow at residues 437 to 466 and 470 to 496; these read NRST…CDSS and GAGL…VKNE. The interval 502–539 is disordered; that stretch reads ARTHIPEPKKKVELTEEQEREQAERKKEKKARQKEKEK. Basic and acidic residues predominate over residues 505–515; sequence HIPEPKKKVEL. Positions 510–557 form a coiled coil; that stretch reads KKKVELTEEQEREQAERKKEKKARQKEKEKLKKEIAKRDVEEMEERQK.

Belongs to the ANKZF1/VMS1 family. In larval stages and in adults, expressed in intestinal cells, specific neurons in the head and the tail, and in the ventral nerve cord.

The protein resides in the cytoplasm. The protein localises to the mitochondrion. Endonuclease that cleaves polypeptidyl-tRNAs downstream of the ribosome-associated quality control (RQC) pathway to release incompletely synthesized polypeptides for degradation. The RQC pathway disassembles aberrantly stalled translation complexes to recycle or degrade the constituent parts. Dispensable for viability and growth but is required for protection against oxidative stress and for wild-type life span. The protein is tRNA endonuclease vms-1 (vms-1) of Caenorhabditis elegans.